The sequence spans 687 residues: Complement C1s subcomponent (687 aa).

The N-terminal stretch at 1–15 is a signal peptide; the sequence is MWCIVLLSLLAWVDA. The 115-residue stretch at 16-130 folds into the CUB 1 domain; sequence EPTMYGEILS…TGFAAYYVAV (115 aa). The Ca(2+) site is built by Glu-60, Asp-68, Asp-113, Asp-131, Val-132, and Glu-134. An intrachain disulfide couples Cys-65 to Cys-83. Residues 131-172 form the EGF-like; calcium-binding domain; that stretch reads DVNECTDFADSPCSHFCNNYIGGYFCSCPPEYFLHEDKKNCG. 3 disulfides stabilise this stretch: Cys-135–Cys-147, Cys-143–Cys-156, and Cys-158–Cys-171. Residues Asn-149, Tyr-150, and Gly-153 each contribute to the Ca(2+) site. Asn-149 bears the (3R)-3-hydroxyasparagine mark. The N-linked (GlcNAc...) asparagine glycan is linked to Asn-174. Cystine bridges form between Cys-175-Cys-202, Cys-234-Cys-251, Cys-294-Cys-341, Cys-321-Cys-354, Cys-359-Cys-403, Cys-386-Cys-421, Cys-425-Cys-548, Cys-594-Cys-617, and Cys-626-Cys-658. A CUB 2 domain is found at 175–290; sequence CSGDVFTTLI…KGWKFRYHGD (116 aa). Sushi domains lie at 292–356 and 357–423; these read IPCP…RCQP and VDCG…KCVP. The N-linked (GlcNAc...) asparagine glycan is linked to Asn-406. Residues 438–679 form the Peptidase S1 domain; that stretch reads IFGGIITKIE…YIDWIRETMQ (242 aa). Catalysis depends on charge relay system residues His-475 and Asp-528. Ser-630 (charge relay system) is an active-site residue.

Belongs to the peptidase S1 family. In terms of assembly, C1 is a calcium-dependent trimolecular complex of C1q, C1r and C1s in the molar ration of 1:2:2. Activated C1s is an disulfide-linked heterodimer of a heavy chain and a light chain. Post-translationally, the iron and 2-oxoglutarate dependent 3-hydroxylation of aspartate and asparagine is (R) stereospecific within EGF domains.

The catalysed reaction is Cleavage of Arg-|-Ala bond in complement component C4 to form C4a and C4b, and Lys(or Arg)-|-Lys bond in complement component C2 to form C2a and C2b: the 'classical' pathway C3 convertase.. Its activity is regulated as follows. Inhibited by SERPING1. In terms of biological role, C1s B chain is a serine protease that combines with C1q and C1r to form C1, the first component of the classical pathway of the complement system. C1r activates C1s so that it can, in turn, activate C2 and C4. Also cleaves IGFBP5 and thereby inhibits the trophic effects of IGF1. The polypeptide is Complement C1s subcomponent (Sus scrofa (Pig)).